The sequence spans 317 residues: Melanocyte-stimulating hormone receptor (317 aa).

The Extracellular segment spans residues 1–37 (MPVQGSLRSLVGAVNSTPTASPHLRPATNQTEPQCLE). A glycan (N-linked (GlcNAc...) asparagine) is linked at asparagine 29. The chain crosses the membrane as a helical span at residues 38-63 (VSVPVGLFLCLGLVSLVENTLVVAVI). Topologically, residues 64-72 (AKNRNLHSP) are cytoplasmic. Residues 73-93 (MYCFICCLALSDLLVSVSNVL) traverse the membrane as a helical segment. At 94–118 (KTAVLLLLEAGALAAQATVVQQLGN) the chain is on the extracellular side. Residues 119–140 (VINMLICSSMVSSLCFLGAIAM) form a helical membrane-spanning segment. Topologically, residues 141-163 (DRYISIFYALRYHSIVTLARARR) are cytoplasmic. A helical membrane pass occupies residues 164–183 (AIAAVWVASILSSILFFTYY). The Extracellular segment spans residues 184-191 (DRTAALLC). Residues 192–211 (LVVFFLAMLVLMAVLYVHML) form a helical membrane-spanning segment. Residues 212 to 240 (TQACQHAQGIARLHKRQHPVQQGWGLKGA) lie on the Cytoplasmic side of the membrane. Residues 241–266 (ATLAVLLGVFFLCWGPLFLHLTLIAV) form a helical membrane-spanning segment. Residues 267–279 (CPQHPTCNCIVKN) lie on the Extracellular side of the membrane. The chain crosses the membrane as a helical span at residues 280 to 300 (FKLFLALIICNAIVDPLIYAF). At 301-317 (RSQELRKTLKEVLLFSW) the chain is on the cytoplasmic side.

Belongs to the G-protein coupled receptor 1 family. As to quaternary structure, interacts with MGRN1, but does not undergo MGRN1-mediated ubiquitination; this interaction competes with GNAS-binding and thus inhibits agonist-induced cAMP production. Interacts with OPN3; the interaction results in a decrease in MC1R-mediated cAMP signaling and ultimately a decrease in melanin production in melanocytes.

Its subcellular location is the cell membrane. In terms of biological role, receptor for MSH (alpha, beta and gamma) and ACTH. The activity of this receptor is mediated by G proteins which activate adenylate cyclase. Mediates melanogenesis, the production of eumelanin (black/brown) and phaeomelanin (red/yellow), via regulation of cAMP signaling in melanocytes. This Varecia rubra (Red ruffed lemur) protein is Melanocyte-stimulating hormone receptor (MC1R).